Here is a 294-residue protein sequence, read N- to C-terminus: MTATVSHAGPQVVILTGVSGSGKSTALRALEDAGFYCVDNLPIVFLEKLLELSGHTAGEVSRMALVVDAREGRFLVEAPRVIRELRQKGADVEVLFLDASDEALVRRYSETRRRHPLAGEGGTVPDGIAAERLALADVRGIADEVIDTTTLNVHELKRLVTRRFVAGDGAKLGVTLVSFGFRFGIPTHADLVLDVRFLPNPFFVPELKPHPGTDPRVAEFVLGQADAKAFLERLVDLLGFLLPRYRNEGKSYLTIAIGCTGGKHRSVALAAALAERLEGSGQPVRLWHRDVEKE.

Residue 17-24 (GVSGSGKS) coordinates ATP. Residue 68–71 (DARE) participates in GTP binding.

It belongs to the RapZ-like family.

In terms of biological role, displays ATPase and GTPase activities. In Anaeromyxobacter dehalogenans (strain 2CP-C), this protein is Nucleotide-binding protein Adeh_0147.